The following is a 377-amino-acid chain: Prolargin (377 aa).

The signal sequence occupies residues 1–21 (MRASFFWFLPLLLILASVAQG). The disordered stretch occupies residues 22-61 (QPRPKPGIRRKPKPRPTPSFPQPHEPAEPTDLPPPLPPGP). Pro residues-rich tracts occupy residues 36–45 (RPTPSFPQPH) and 52–61 (DLPPPLPPGP). 12 LRR repeats span residues 90-109 (RKVP…NNFI), 110-133 (TELP…NNRI), 134-157 (RKVD…KNQL), 158-178 (EEVP…QNLI), 179-202 (SRIP…HNRL), 203-228 (SDGV…HNIL), 229-249 (RRMP…SNKI), 250-273 (ETIP…YNKL), 274-298 (SDRG…HNKI), 299-318 (SNVP…NNSI), 319-357 (EKIN…GNFL), and 358-377 (KPPI…SVVI). N-linked (GlcNAc...) asparagine glycosylation occurs at Asn119. N-linked (GlcNAc...) asparagine glycosylation is found at Asn284, Asn315, and Asn322. Residues Cys327 and Cys368 are joined by a disulfide bond.

This sequence belongs to the small leucine-rich proteoglycan (SLRP) family. SLRP class II subfamily. As to quaternary structure, binds the basement membrane heparan sulfate proteoglycan perlecan and triple helical collagens type I and type II. Glycosylated; contains heparan sulfate.

The protein localises to the secreted. It is found in the extracellular space. It localises to the extracellular matrix. May anchor basement membranes to the underlying connective tissue. The polypeptide is Prolargin (Prelp) (Rattus norvegicus (Rat)).